The chain runs to 483 residues: Matrix metalloproteinase-20 (483 aa).

The N-terminal stretch at 1 to 22 (MKVLPASGLAVFLIMALKFSTA) is a signal peptide. Residues 23 to 107 (APSLVAASPR…PRCGVPDVAN (85 aa)) constitute a propeptide that is removed on maturation. A Cysteine switch motif is present at residues 98–105 (PRCGVPDV). Position 100 (Cys100) interacts with Zn(2+). Positions 164, 165, and 166 each coordinate Ca(2+). Zn(2+)-binding residues include His176 and Asp178. Positions 183, 184, 186, and 188 each coordinate Ca(2+). His191 is a Zn(2+) binding site. 4 residues coordinate Ca(2+): Glu197, Gly198, Gly200, and Asp202. A Zn(2+)-binding site is contributed by His204. Residues Asp206 and Glu209 each coordinate Ca(2+). His226 contributes to the Zn(2+) binding site. Residue Glu227 is part of the active site. The Zn(2+) site is built by His230 and His236. 4 Hemopexin repeats span residues 293-343 (PDLC…FPQL), 344-389 (MSNV…GFPR), 391-439 (VQQI…FSGV), and 440-483 (NGQI…WIGC). Cys296 and Cys483 form a disulfide bridge.

It belongs to the peptidase M10A family. It depends on Zn(2+) as a cofactor. Requires Ca(2+) as cofactor. Post-translationally, autoactivates at least at the 107-Asn-|-Tyr-108 site. As to expression, expressed specifically in the enamel organ.

It is found in the secreted. Its subcellular location is the extracellular space. The protein localises to the extracellular matrix. Degrades amelogenin, the major protein component of the enamel matrix and two of the macromolecules characterizing the cartilage extracellular matrix: aggrecan and the cartilage oligomeric matrix protein (COMP). May play a central role in tooth enamel formation. Cleaves aggrecan at the '360-Asn-|-Phe-361' site. This is Matrix metalloproteinase-20 (MMP20) from Homo sapiens (Human).